We begin with the raw amino-acid sequence, 115 residues long: NADH-ubiquinone oxidoreductase chain 3 (115 aa).

3 helical membrane passes run 4 to 24, 55 to 75, and 86 to 106; these read LMALMVNITLSILLITVAFWL, FFLVAITFLLYDLEIALLLPL, and TMMLTAFILVSVLALGLAYEW.

The protein belongs to the complex I subunit 3 family. As to quaternary structure, core subunit of respiratory chain NADH dehydrogenase (Complex I) which is composed of 45 different subunits. Interacts with TMEM186. Interacts with TMEM242.

It is found in the mitochondrion inner membrane. The catalysed reaction is a ubiquinone + NADH + 5 H(+)(in) = a ubiquinol + NAD(+) + 4 H(+)(out). Its function is as follows. Core subunit of the mitochondrial membrane respiratory chain NADH dehydrogenase (Complex I) which catalyzes electron transfer from NADH through the respiratory chain, using ubiquinone as an electron acceptor. Essential for the catalytic activity of complex I. The chain is NADH-ubiquinone oxidoreductase chain 3 from Peromyscus gossypinus (Cotton deermouse).